The following is a 967-amino-acid chain: RNA polymerase-associated protein RapA (967 aa).

A Helicase ATP-binding domain is found at 163–337 (EVGQRTAPRV…FARLSLLDPD (175 aa)). Residue 176 to 183 (DEVGLGKT) participates in ATP binding. A DEAH box motif is present at residues 283–286 (DEAH). One can recognise a Helicase C-terminal domain in the interval 489–660 (RLEWLITFLK…KFLQNPTALE (172 aa)).

The protein belongs to the SNF2/RAD54 helicase family. RapA subfamily. Interacts with the RNAP. Has a higher affinity for the core RNAP than for the holoenzyme. Its ATPase activity is stimulated by binding to RNAP.

Functionally, transcription regulator that activates transcription by stimulating RNA polymerase (RNAP) recycling in case of stress conditions such as supercoiled DNA or high salt concentrations. Probably acts by releasing the RNAP, when it is trapped or immobilized on tightly supercoiled DNA. Does not activate transcription on linear DNA. Probably not involved in DNA repair. The protein is RNA polymerase-associated protein RapA of Pasteurella multocida (strain Pm70).